The sequence spans 203 residues: ATP synthase subunit b (203 aa).

The chain crosses the membrane as a helical span at residues 14 to 34 (FVWPLLGAGLLLAAEGVAWAS).

The protein belongs to the ATPase B chain family. As to quaternary structure, F-type ATPases have 2 components, F(1) - the catalytic core - and F(0) - the membrane proton channel. F(1) has five subunits: alpha(3), beta(3), gamma(1), delta(1), epsilon(1). F(0) has three main subunits: a(1), b(2) and c(10-14). The alpha and beta chains form an alternating ring which encloses part of the gamma chain. F(1) is attached to F(0) by a central stalk formed by the gamma and epsilon chains, while a peripheral stalk is formed by the delta and b chains.

The protein localises to the cell inner membrane. Its function is as follows. F(1)F(0) ATP synthase produces ATP from ADP in the presence of a proton or sodium gradient. F-type ATPases consist of two structural domains, F(1) containing the extramembraneous catalytic core and F(0) containing the membrane proton channel, linked together by a central stalk and a peripheral stalk. During catalysis, ATP synthesis in the catalytic domain of F(1) is coupled via a rotary mechanism of the central stalk subunits to proton translocation. In terms of biological role, component of the F(0) channel, it forms part of the peripheral stalk, linking F(1) to F(0). This is ATP synthase subunit b from Syntrophobacter fumaroxidans (strain DSM 10017 / MPOB).